The following is a 930-amino-acid chain: Isoleucine--tRNA ligase (930 aa).

The 'HIGH' region motif lies at 57-67; that stretch reads PYANGHLHLGH. Glu555 contacts L-isoleucyl-5'-AMP. The 'KMSKS' region motif lies at 596-600; the sequence is KMSKS. Lys599 contacts ATP. Zn(2+) is bound by residues Cys896, Cys899, Cys916, and Cys919.

It belongs to the class-I aminoacyl-tRNA synthetase family. IleS type 1 subfamily. As to quaternary structure, monomer. Requires Zn(2+) as cofactor.

The protein resides in the cytoplasm. The catalysed reaction is tRNA(Ile) + L-isoleucine + ATP = L-isoleucyl-tRNA(Ile) + AMP + diphosphate. Catalyzes the attachment of isoleucine to tRNA(Ile). As IleRS can inadvertently accommodate and process structurally similar amino acids such as valine, to avoid such errors it has two additional distinct tRNA(Ile)-dependent editing activities. One activity is designated as 'pretransfer' editing and involves the hydrolysis of activated Val-AMP. The other activity is designated 'posttransfer' editing and involves deacylation of mischarged Val-tRNA(Ile). This chain is Isoleucine--tRNA ligase, found in Moorella thermoacetica (strain ATCC 39073 / JCM 9320).